Reading from the N-terminus, the 238-residue chain is Sugar fermentation stimulation protein homolog (238 aa).

The protein belongs to the SfsA family.

This Pseudoalteromonas translucida (strain TAC 125) protein is Sugar fermentation stimulation protein homolog.